The sequence spans 414 residues: 3-oxo-isoapionate-4-phosphate transcarboxylase/hydrolase (414 aa).

The Mg(2+) site is built by K180, D182, and E183. K180 bears the N6-carboxylysine mark.

It belongs to the RuBisCO large chain family. Requires Mg(2+) as cofactor.

The catalysed reaction is 3-oxoisoapionate 4-phosphate + H2O = (2R)-3-phosphoglycerate + glycolate + H(+). It participates in carbohydrate metabolism. Functionally, involved in catabolism of D-apiose. Catalyzes the conversion of 3-oxo-isoapionate 4-phosphate to 3-phosphoglycerate and glycolate. The sequence is that of 3-oxo-isoapionate-4-phosphate transcarboxylase/hydrolase from Xanthobacter autotrophicus (strain ATCC BAA-1158 / Py2).